Reading from the N-terminus, the 1521-residue chain is MSDSENDYSDESSGSEYESPVKKGKSAPKKPAAAGSKKKASATRKPAAKKATTTTTSTTKKSTTSKKSESDNDDFSGDDKSSSSDNENVFKNIASSAKKGKSIEEIYQKKELLDQILLRPDTYIGSTERQEEELWVWEDKRMVHRKVSFVPGIYKIFDEILVNAADNKQREGNMKFIKVVIDREKGFISVTNDGAGIPIQVHSEHKIYIPELIFGNLLTSSHYDDSEKRLTGGRNGFGAKLANIFSTKFIVECADSKSKKLYKQTFTNNMRSKEDPKITSYQNKTDYTKITFYPELDRFGMVEFDDDLVALLSKRVYDIAGCNPTLKVSLNDEELGIRSFEKYINLYFPDEENAPKVYYEKVSDRWELAVTLSKESQFNQVSFVNSICTVKGGTHVTHALSNIVTAIQEQVNKKNKGSADIKPAFIKNHLSVFVNCLIENPHFDSQTKETLTSKISSFGSRCEPSEKFIKRVLDSKSGIVASILEFAQFKDQSALKRSTSSGGKKGKVSIPKLDDANLAGGTKSEDCTLILTEGDSAKSLATAGISVVGKDHYGAFPLKGKLLNVRDQSTKVINNDEINNIVTILGLKYGKVYETLSDLRYGHLMIMTDQDHDGSHIKGLIINMVHHFWPTLLRMPGFLVEFITPIVKVFKNNQKPISFYTMPEFLKWRETNDKGWDVKYYKGLGTSTPGEGKEYFSDLERHKIDFEWDEGANDNIELAFSKSRADDRKKWMAEHIEGTFLEQFGVKKLTYSDFINKELVLFSIADCERSIPNIVDGLKTSHRKTLYSCFKRNLKKEIKVAQLIGYVSEHSAYHHGEASLYSTIVGMAQEFVGSNNINLLNPAGSYGTRIAGGKDCSSARYIHTRLNDIARAVYHADDDPILSCVVDDGKKVQPKFYIPVIPMILVNGCVGIGTGWSSTIPNYNPRDLIQNMRLAIDGKPLKPIKPWYRGFLGSIEANQGSKVQGGQYLSKGIWKKLSDNRFEITELPIGFWTQDYRELLDELETPGTRKKKKEEKEKKAASRKGTKAKPTTTKRSKRVDDDDDNEKVTEATVKSYTNYSSESTIHFIIDTIQPVDEINIEKVFKLVSTINETNMVVFDEEGRIQRFATTTALQEHFFPLRIKHYQMRKDFLSERLSEEYSRLSNKARFILAVVNKELVISNVKKVDLINKLKEMKFDRIINKNSNKSARDKIKKKKNAFDEEDAAISSDEEKDGAQEEQDDDTKGYDYLLSLPLWSLTLERVKKLIEERDSKKKEWDILLSTPIQEIYKRDLDALEKALDDQDAYDESLKNQTESLKKRTKTKALPRAKKISAKVVKDTKEAPLTKLVKPTVKIPTTTDSNVSGSKRKKSDDTTSTSTSTTTSSNTKPIESFFAKEDKKPTPAVKKSTLVSLDSDSDFDDDVVVSSKPKAPPKKTSKVIELSDESDQESDQESDQGSDPESPPKRSKAPPKKPTTIATKKATTSKSKVIDDKSSDDEVIKAPTNRPTRSRVPPPKSLSFLDSDSDDDDLYDNEESSSDSD.

Residues 1–10 (MSDSENDYSD) show a composition bias toward acidic residues. A disordered region spans residues 1 to 87 (MSDSENDYSD…DDKSSSSDNE (87 aa)). Residues 36–48 (SKKKASATRKPAA) show a composition bias toward basic residues. The segment covering 49-62 (KKATTTTTSTTKKS) has biased composition (low complexity). ATP contacts are provided by residues N163, N192, 220 to 222 (SSH), and 233 to 240 (GRNGFGAK). The interaction with DNA stretch occupies residues 412–414 (NKK). 446-448 (QTK) contributes to the ATP binding site. Residues 527 to 640 (CTLILTEGDS…TLLRMPGFLV (114 aa)) form the Toprim domain. Mg(2+) is bound by residues E533, D609, and D611. In terms of domain architecture, Topo IIA-type catalytic spans 771–1273 (IPNIVDGLKT…PIQEIYKRDL (503 aa)). Y861 serves as the catalytic O-(5'-phospho-DNA)-tyrosine intermediate. The interval 1007 to 1047 (GTRKKKKEEKEKKAASRKGTKAKPTTTKRSKRVDDDDDNEK) is disordered. Basic residues predominate over residues 1021–1037 (ASRKGTKAKPTTTKRSK). Residues 1085–1094 (KLVSTINETN) form an interaction with DNA region. Disordered stretches follow at residues 1192–1222 (KIKK…EQDD) and 1335–1521 (IPTT…SDSD). Acidic residues predominate over residues 1201-1222 (DEEDAAISSDEEKDGAQEEQDD). A compositionally biased stretch (low complexity) spans 1354–1368 (TTSTSTSTTTSSNTK). Positions 1422-1438 (LSDESDQESDQESDQGS) are enriched in acidic residues. Low complexity predominate over residues 1454-1467 (PTTIATKKATTSKS). Residues 1468–1480 (KVIDDKSSDDEVI) show a composition bias toward basic and acidic residues. The segment covering 1503 to 1521 (SDSDDDDLYDNEESSSDSD) has biased composition (acidic residues).

This sequence belongs to the type II topoisomerase family. Homodimer. Mg(2+) serves as cofactor. It depends on Mn(2+) as a cofactor. Ca(2+) is required as a cofactor.

It localises to the nucleus. The catalysed reaction is ATP-dependent breakage, passage and rejoining of double-stranded DNA.. Control of topological states of DNA by transient breakage and subsequent rejoining of DNA strands. Topoisomerase II makes double-strand breaks. This Dictyostelium discoideum (Social amoeba) protein is Probable DNA topoisomerase 2 (top2).